The sequence spans 203 residues: Urease accessory protein UreG (203 aa).

10–17 contacts GTP; sequence GPVGAGKT.

It belongs to the SIMIBI class G3E GTPase family. UreG subfamily. In terms of assembly, homodimer. UreD, UreF and UreG form a complex that acts as a GTP-hydrolysis-dependent molecular chaperone, activating the urease apoprotein by helping to assemble the nickel containing metallocenter of UreC. The UreE protein probably delivers the nickel.

The protein localises to the cytoplasm. In terms of biological role, facilitates the functional incorporation of the urease nickel metallocenter. This process requires GTP hydrolysis, probably effectuated by UreG. This is Urease accessory protein UreG from Micrococcus luteus (strain ATCC 4698 / DSM 20030 / JCM 1464 / CCM 169 / CCUG 5858 / IAM 1056 / NBRC 3333 / NCIMB 9278 / NCTC 2665 / VKM Ac-2230) (Micrococcus lysodeikticus).